The primary structure comprises 305 residues: CRISPR-associated endonuclease Cas1 (305 aa).

Positions 96 to 278 are sufficient for cleavage of ssRNA, ssDNA and Holliday junction DNA; it reads SDKLLYQAKL…EDVLAAGEIQ (183 aa). The Mg(2+) site is built by Glu141, His208, and Asp221. Residues 278-305 form a disordered region; that stretch reads QPPAPPEDAQPVAIPLPVSLGDAGHRSS.

It belongs to the CRISPR-associated endonuclease Cas1 family. As to quaternary structure, homodimer. Part of the Cas1-Cas2 complex. Interacts with RecB, RecC, RuvB, CasC and CasE. Forms a hexamer with 2 Cas1 dimers sandwiching a Cas2 dimer. The DNA lies across a flat surface extending from 1 Cas1 dimer, across the Cas2 dimer and contacting the other Cas1 dimer. Only 1 Cas1 protein from each dimer is catalytic, the other interacts with the Cas2 dimer and possibly target DNA. It depends on Mg(2+) as a cofactor.

It localises to the cytoplasm. Its activity is regulated as follows. Nuclease activity partially inhibited by CasE. Its function is as follows. CRISPR (clustered regularly interspaced short palindromic repeat), is an adaptive immune system that provides protection against mobile genetic elements (viruses, transposable elements and conjugative plasmids). CRISPR clusters contain sequences complementary to antecedent mobile elements and target invading nucleic acids. CRISPR clusters are transcribed and processed into CRISPR RNA (crRNA). The Cas1-Cas2 complex is involved in CRISPR adaptation, the first stage of CRISPR immunity, being required for the addition/removal of CRISPR spacers at the leader end of the CRISPR locus. The Cas1-Cas2 complex introduces staggered nicks into both strands of the CRISPR array near the leader repeat and joins the 5'-ends of the repeat strands with the 3'-ends of the new spacer sequence. Spacer DNA integration requires supercoiled target DNA and 3'-OH ends on the inserted (spacer) DNA and probably initiates with a nucleophilic attack of the C 3'-OH end of the protospacer on the minus strand of the first repeat sequence. Expression of Cas1-Cas2 in a strain lacking both genes permits spacer acquisition. Non-specifically binds DNA; the Cas1-Cas2 complex preferentially binds CRISPR-locus DNA. Highest binding is seen to a dual forked DNA complex with 3'-overhangs and a protospacer-adjacent motif-complement specifically positioned. The protospacer DNA lies across a flat surface extending from 1 Cas1 dimer, across the Cas2 dimer and contacting the other Cas1 dimer; the 23 bp-long ds section of the DNA is bracketed by 1 Tyr-22 from each of the Cas1 dimers. Cas1 cuts within the 3'-overhang, to generate a 33-nucleotide DNA that is probably incorporated into the CRISPR leader by a cut-and-paste mechanism. Cas1 alone endonucleolytically cleaves linear ssRNA, ssDNA and short (34 base) dsDNA as well as branched DNA substrates such as Holliday junctions, replication forks and 5'-flap DNA substrates. In vitro catalyzes a concerted transesterification reaction on branched DNA, as would be expected during integration of protospacers into the CRISPR leader sequence; Cas2 is not required in vitro. This reaction requires a 3'-OH group at the branch point. Genetic interactions suggest Cas1 interacts with components of the RecBC and RuvB DNA repair systems. The polypeptide is CRISPR-associated endonuclease Cas1 (ygbT) (Escherichia coli (strain K12)).